A 327-amino-acid chain; its full sequence is Serpentine receptor class gamma-2 (327 aa).

A run of 6 helical transmembrane segments spans residues 35 to 55, 70 to 90, 157 to 177, 181 to 203, 244 to 264, and 277 to 297; these read LVQF…LYIL, ILFI…IFFA, MKYA…NIII, LPVY…ATMT, IASF…SLFA, and FLLP…MVMA.

The protein belongs to the nematode receptor-like protein srg family.

The protein localises to the membrane. This Caenorhabditis elegans protein is Serpentine receptor class gamma-2 (srg-2).